Here is a 661-residue protein sequence, read N- to C-terminus: SUMO-activating enzyme subunit 2 (661 aa).

ATP contacts are provided by residues 29-34 (GAGGIG), Asp-53, 61-64 (NLNR), Lys-77, and 122-127 (DNISAR). Residues Cys-163 and Cys-166 each coordinate Zn(2+). Residue Cys-178 is the Glycyl thioester intermediate of the active site. Residues Cys-436 and Cys-439 each contribute to the Zn(2+) site. Positions 545 to 661 (KKQQQKEKDQ…SKKLKSNLQD (117 aa)) are disordered. Over residues 548-563 (QQKEKDQKEGKTTTIE) the composition is skewed to basic and acidic residues. Low complexity-rich tracts occupy residues 577 to 607 (TSQT…NNNN) and 623 to 634 (SSTTTSSATPSI).

Belongs to the ubiquitin-activating E1 family. Heterodimer of sae1 and sae2. The complex binds sumo via sae2.

Its subcellular location is the nucleus. It functions in the pathway protein modification; protein sumoylation. Functionally, the dimeric enzyme acts as an E1 ligase for sumo. It mediates ATP-dependent activation of sumo and formation of a thioester with a conserved cysteine residue on sae2. The protein is SUMO-activating enzyme subunit 2 (uba2) of Dictyostelium discoideum (Social amoeba).